The chain runs to 145 residues: Photosystem I reaction center subunit XI (145 aa).

3 helical membrane-spanning segments follow: residues 48–68, 75–95, and 125–145; these read LEIG…LGPL, LLVG…ALTI, and IGAL…SFFA.

It belongs to the PsaL family.

It localises to the plastid. Its subcellular location is the chloroplast thylakoid membrane. This Isochrysis galbana (Marine planktonic alga) protein is Photosystem I reaction center subunit XI.